An 889-amino-acid polypeptide reads, in one-letter code: Low-affinity potassium transport protein (889 aa).

The Cytoplasmic portion of the chain corresponds to 1-51; the sequence is MPTAKRTSSRASLALPFQLRLVHKKSWGHRLRDFISGFLKSCRPIAKYVFP. A helical transmembrane segment spans residues 52–73; that stretch reads NFIVVHYIYLITLSIIGSILLY. The Extracellular segment spans residues 74-80; sequence PCKNTAF. Residues 81-101 traverse the membrane as a helical segment; sequence IDVLFLAAGASTQGGLATKST. The Cytoplasmic segment spans residues 102 to 109; sequence NDFNLYQQ. The helical transmembrane segment at 110-130 threads the bilayer; the sequence is IVVYVITLLSTPILIHGFLAF. Over 131–464 the chain is Extracellular; that stretch reads VRLYWFERYF…EYRALRLLCC (334 aa). The interval 189–244 is disordered; sequence REDPRQSASDVPMDSPDTSALSSISPLNVSSSKEESSDTQSSPPNFSSKRQPSDVD. Low complexity predominate over residues 207–219; that stretch reads SALSSISPLNVSS. N-linked (GlcNAc...) asparagine glycosylation is found at N216, N233, and N265. A helical transmembrane segment spans residues 465 to 487; the sequence is ILMVYYIGFNILAFVTIVPWACT. Over 488–499 the chain is Cytoplasmic; it reads RHHYSEIIRRNG. Residues 500–521 form a helical membrane-spanning segment; that stretch reads VSPTWWGFFTAMSAFSNLGLSL. Topologically, residues 522–524 are extracellular; sequence TAD. A helical membrane pass occupies residues 525–545; the sequence is SMVSFDTAPYPLIFMMFFIII. The Cytoplasmic segment spans residues 546-548; the sequence is GNT. Residues 549 to 569 form a helical membrane-spanning segment; sequence GFPIMLRFIIWIMFKTSRDLS. Residues 570 to 584 lie on the Extracellular side of the membrane; that stretch reads QFKESLGFLLDHPRR. The helical transmembrane segment at 585-605 threads the bilayer; sequence CFTLLFPSGPTWWLFTTLVVL. Over 606 to 609 the chain is Cytoplasmic; sequence NATD. Residues 610-630 form a helical membrane-spanning segment; it reads WILFIILDFNSAVVRQVAKGY. The Extracellular segment spans residues 631-657; that stretch reads RALMGLFQSVCTRTAGFNVVDLSKLHP. Residues 658-678 traverse the membrane as a helical segment; that stretch reads SIQVSYMLMMYVSVLPLAISI. Residues 679-743 are Cytoplasmic-facing; the sequence is RRTNVYEEQS…KSFVGAHLRR (65 aa). Positions 705–733 are disordered; that stretch reads DDIKETDHDGESEERDTVSTKSKPKKQSP. The chain crosses the membrane as a helical span at residues 744 to 764; sequence QLSFDLWYLFLGLFIICICEG. Topologically, residues 765–776 are extracellular; sequence RKIEDVNKPDFN. The helical transmembrane segment at 777-797 threads the bilayer; the sequence is VFAILFEVVSAYGTVGLSLGY. Residues 798 to 889 lie on the Cytoplasmic side of the membrane; sequence PNTNTSLSAQ…KIATKFWGKH (92 aa).

This sequence belongs to the TrkH potassium transport family.

The protein resides in the membrane. Functionally, this protein is required for low-affinity potassium transport. In Saccharomyces cerevisiae (strain ATCC 204508 / S288c) (Baker's yeast), this protein is Low-affinity potassium transport protein (TRK2).